We begin with the raw amino-acid sequence, 321 residues long: Glycerol-3-phosphate dehydrogenase [NAD(P)+] (321 aa).

NADPH contacts are provided by Trp-15, Arg-35, and Lys-101. 2 residues coordinate sn-glycerol 3-phosphate: Lys-101 and Gly-129. Ala-133 is a binding site for NADPH. 5 residues coordinate sn-glycerol 3-phosphate: Lys-184, Asp-237, Ser-247, Arg-248, and Asn-249. The active-site Proton acceptor is Lys-184. Arg-248 serves as a coordination point for NADPH. Residues Val-268 and Glu-270 each coordinate NADPH.

This sequence belongs to the NAD-dependent glycerol-3-phosphate dehydrogenase family.

The protein localises to the cytoplasm. The catalysed reaction is sn-glycerol 3-phosphate + NAD(+) = dihydroxyacetone phosphate + NADH + H(+). It catalyses the reaction sn-glycerol 3-phosphate + NADP(+) = dihydroxyacetone phosphate + NADPH + H(+). It participates in membrane lipid metabolism; glycerophospholipid metabolism. Catalyzes the reduction of the glycolytic intermediate dihydroxyacetone phosphate (DHAP) to sn-glycerol 3-phosphate (G3P), the key precursor for phospholipid synthesis. The sequence is that of Glycerol-3-phosphate dehydrogenase [NAD(P)+] from Acidiphilium cryptum (strain JF-5).